Here is a 179-residue protein sequence, read N- to C-terminus: Large ribosomal subunit protein uL5 (179 aa).

This sequence belongs to the universal ribosomal protein uL5 family. Part of the 50S ribosomal subunit; part of the 5S rRNA/L5/L18/L25 subcomplex. Contacts the 5S rRNA and the P site tRNA. Forms a bridge to the 30S subunit in the 70S ribosome.

This is one of the proteins that bind and probably mediate the attachment of the 5S RNA into the large ribosomal subunit, where it forms part of the central protuberance. In the 70S ribosome it contacts protein S13 of the 30S subunit (bridge B1b), connecting the 2 subunits; this bridge is implicated in subunit movement. Contacts the P site tRNA; the 5S rRNA and some of its associated proteins might help stabilize positioning of ribosome-bound tRNAs. The chain is Large ribosomal subunit protein uL5 from Burkholderia ambifaria (strain MC40-6).